The sequence spans 456 residues: CBL-interacting protein kinase 16 (456 aa).

Residues 22–277 (YELGRLLGQG…IPEIMRTPWF (256 aa)) enclose the Protein kinase domain. Residues 28 to 36 (LGQGTFAKV) and lysine 51 contribute to the ATP site. The active-site Proton acceptor is the aspartate 145. The activation loop stretch occupies residues 163-192 (DFGLAALPEQLRQDGLLHTQCGTPAYVAPE). One can recognise an NAF domain in the interval 309–335 (AMSPRTCNAFQLISSMSSGFDLSGMFE). Residues 339 to 368 (KAATVFTSRAPAATVIQKLEAVGRSLGYSA) are PPI.

It belongs to the protein kinase superfamily. CAMK Ser/Thr protein kinase family. SNF1 subfamily. Mn(2+) is required as a cofactor.

It carries out the reaction L-seryl-[protein] + ATP = O-phospho-L-seryl-[protein] + ADP + H(+). It catalyses the reaction L-threonyl-[protein] + ATP = O-phospho-L-threonyl-[protein] + ADP + H(+). Functionally, CIPK serine-threonine protein kinases interact with CBL proteins. Binding of a CBL protein to the regulatory NAF domain of CIPK protein lead to the activation of the kinase in a calcium-dependent manner. This chain is CBL-interacting protein kinase 16 (CIPK16), found in Oryza sativa subsp. japonica (Rice).